A 231-amino-acid chain; its full sequence is Probable septum site-determining protein MinC (231 aa).

Residues 101 to 125 are disordered; the sequence is GKEKAPRPAPTPQAPAQNTTPVTKT. A compositionally biased stretch (low complexity) spans 114–123; the sequence is APAQNTTPVT.

It belongs to the MinC family. As to quaternary structure, interacts with MinD and FtsZ.

Cell division inhibitor that blocks the formation of polar Z ring septums. Rapidly oscillates between the poles of the cell to destabilize FtsZ filaments that have formed before they mature into polar Z rings. Prevents FtsZ polymerization. This is Probable septum site-determining protein MinC from Escherichia coli (strain ATCC 8739 / DSM 1576 / NBRC 3972 / NCIMB 8545 / WDCM 00012 / Crooks).